The primary structure comprises 188 residues: Elongation factor P (188 aa).

An N6-(3,6-diaminohexanoyl)-5-hydroxylysine modification is found at Lys-34.

The protein belongs to the elongation factor P family. Post-translationally, may be beta-lysylated on the epsilon-amino group of Lys-34 by the combined action of EpmA and EpmB, and then hydroxylated on the C5 position of the same residue by EpmC (if this protein is present). Lysylation is critical for the stimulatory effect of EF-P on peptide-bond formation. The lysylation moiety may extend toward the peptidyltransferase center and stabilize the terminal 3-CCA end of the tRNA. Hydroxylation of the C5 position on Lys-34 may allow additional potential stabilizing hydrogen-bond interactions with the P-tRNA.

It is found in the cytoplasm. It functions in the pathway protein biosynthesis; polypeptide chain elongation. Its function is as follows. Involved in peptide bond synthesis. Alleviates ribosome stalling that occurs when 3 or more consecutive Pro residues or the sequence PPG is present in a protein, possibly by augmenting the peptidyl transferase activity of the ribosome. Modification of Lys-34 is required for alleviation. This chain is Elongation factor P, found in Stenotrophomonas maltophilia (strain K279a).